The sequence spans 156 residues: 2-C-methyl-D-erythritol 2,4-cyclodiphosphate synthase (156 aa).

D10 and H12 together coordinate a divalent metal cation. 4-CDP-2-C-methyl-D-erythritol 2-phosphate is bound by residues 10–12 (DSH) and 36–37 (HS). H44 contributes to the a divalent metal cation binding site. Residues 58-60 (DIG) and 63-67 (FKDTD) each bind 4-CDP-2-C-methyl-D-erythritol 2-phosphate.

Belongs to the IspF family. Homotrimer. It depends on a divalent metal cation as a cofactor.

It carries out the reaction 4-CDP-2-C-methyl-D-erythritol 2-phosphate = 2-C-methyl-D-erythritol 2,4-cyclic diphosphate + CMP. It functions in the pathway isoprenoid biosynthesis; isopentenyl diphosphate biosynthesis via DXP pathway; isopentenyl diphosphate from 1-deoxy-D-xylulose 5-phosphate: step 4/6. Involved in the biosynthesis of isopentenyl diphosphate (IPP) and dimethylallyl diphosphate (DMAPP), two major building blocks of isoprenoid compounds. Catalyzes the conversion of 4-diphosphocytidyl-2-C-methyl-D-erythritol 2-phosphate (CDP-ME2P) to 2-C-methyl-D-erythritol 2,4-cyclodiphosphate (ME-CPP) with a corresponding release of cytidine 5-monophosphate (CMP). This is 2-C-methyl-D-erythritol 2,4-cyclodiphosphate synthase from Aquifex aeolicus (strain VF5).